The primary structure comprises 336 residues: Coproporphyrin III ferrochelatase (336 aa).

2 residues coordinate Fe-coproporphyrin III: serine 52 and tyrosine 116. The Fe(2+) site is built by histidine 172 and glutamate 255.

It belongs to the ferrochelatase family.

It is found in the cytoplasm. The catalysed reaction is Fe-coproporphyrin III + 2 H(+) = coproporphyrin III + Fe(2+). It functions in the pathway porphyrin-containing compound metabolism; protoheme biosynthesis. Functionally, involved in coproporphyrin-dependent heme b biosynthesis. Catalyzes the insertion of ferrous iron into coproporphyrin III to form Fe-coproporphyrin III. This Mycolicibacterium paratuberculosis (strain ATCC BAA-968 / K-10) (Mycobacterium paratuberculosis) protein is Coproporphyrin III ferrochelatase.